We begin with the raw amino-acid sequence, 80 residues long: Large ribosomal subunit protein uL24 (80 aa).

Belongs to the universal ribosomal protein uL24 family. Part of the 50S ribosomal subunit.

Its function is as follows. One of two assembly initiator proteins, it binds directly to the 5'-end of the 23S rRNA, where it nucleates assembly of the 50S subunit. Functionally, one of the proteins that surrounds the polypeptide exit tunnel on the outside of the subunit. The protein is Large ribosomal subunit protein uL24 of Chlorobaculum tepidum (strain ATCC 49652 / DSM 12025 / NBRC 103806 / TLS) (Chlorobium tepidum).